The primary structure comprises 401 residues: MENQEKPLSVDEEYDLWKSNVPLMYDFVSETRLTWPSLTVQWLPTPVQELDGGFIKQELIIGTHTSGEEENYLKFAEINLPKEILSNEDPQEEAGEEYQSSLPAPRSNIRITAKYEHEEEITRARYMPQDPNIVATINGQGTVFLYSRSEGLQSTLKFHKDNGYALSFSTLVKGRLLSGSDDHTVALWEVGSGGDPTKPVRTWNDLHSDIINDNKWHNFNKDLFGTVSEDSLLKINDVRANNTTIDTVKCPQPFNTLAFSHHSSNLLAAAGMDSYVYLYDLRNMKEPLHHMSGHEDAVNNLEFSTHVDGVVVSSGSDNRLMMWDLKQIGAEQTPDDAEDGVPELIMVHAGHRSSVNDFDLNPQIPWLVASAEEENILQVWKCSHSLPIVGGPPKVNKDIIS.

WD repeat units lie at residues 116–147 (EHEE…FLYS), 158–189 (FHKD…ALWE), 206–237 (LHSD…KIND), 249–280 (KCPQ…YLYD), and 293–324 (GHED…MMWD). Residues 335–339 (DDAED) form an interaction with the histone H4 N-terminus region. Residues 350-381 (GHRSSVNDFDLNPQIPWLVASAEEENILQVWK) form a WD 6 repeat.

This sequence belongs to the WD repeat RBAP46/RBAP48/MSI1 family. In terms of assembly, component of the HAT-B complex composed of at least HAT1 and HAT2. In the cytoplasm, this complex binds to the histone H4 tail. In the nucleus, the HAT-B complex has an additional component, the histone H3/H4 chaperone HIF1.

The protein resides in the cytoplasm. It is found in the nucleus. Regulatory subunit of the histone acetylase B (HAT-B) complex. The complex acetylates 'Lys-12' of histone H4 which is required for telomeric silencing. HAT2 is required for high affinity binding of the acetyltransferase to histone H4, for the nuclear location of HAT1 and for the HAT1-HIF1 interaction. Alone, it is unable to bind to H4, requiring HAT1 for high affinity interaction with the histone tail. HAT2 also has a HAT1 independent function in life-span regulation. The chain is Histone acetyltransferase type B subunit 2 (HAT2) from Saccharomyces cerevisiae (strain ATCC 204508 / S288c) (Baker's yeast).